A 628-amino-acid polypeptide reads, in one-letter code: tRNA uridine 5-carboxymethylaminomethyl modification enzyme MnmG (628 aa).

FAD contacts are provided by residues 14–19 (GAGHAG), valine 126, and serine 181. 273 to 287 (GPRYCPSIEDKVVRF) lines the NAD(+) pocket. Glutamine 370 lines the FAD pocket.

Belongs to the MnmG family. As to quaternary structure, homodimer. Heterotetramer of two MnmE and two MnmG subunits. It depends on FAD as a cofactor.

Its subcellular location is the cytoplasm. Functionally, NAD-binding protein involved in the addition of a carboxymethylaminomethyl (cmnm) group at the wobble position (U34) of certain tRNAs, forming tRNA-cmnm(5)s(2)U34. This chain is tRNA uridine 5-carboxymethylaminomethyl modification enzyme MnmG, found in Exiguobacterium sibiricum (strain DSM 17290 / CCUG 55495 / CIP 109462 / JCM 13490 / 255-15).